Consider the following 300-residue polypeptide: UPF0282 protein TON_1363 (300 aa).

It belongs to the UPF0282 family.

The chain is UPF0282 protein TON_1363 from Thermococcus onnurineus (strain NA1).